The chain runs to 287 residues: Pantothenate synthetase (287 aa).

30–37 (MGNLHDGH) contacts ATP. The active-site Proton donor is the histidine 37. Glutamine 61 provides a ligand contact to (R)-pantoate. Glutamine 61 provides a ligand contact to beta-alanine. Residue 148-151 (GQKD) coordinates ATP. Glutamine 154 serves as a coordination point for (R)-pantoate. ATP is bound by residues isoleucine 177 and 185-188 (LSSR).

It belongs to the pantothenate synthetase family. In terms of assembly, homodimer.

Its subcellular location is the cytoplasm. It carries out the reaction (R)-pantoate + beta-alanine + ATP = (R)-pantothenate + AMP + diphosphate + H(+). Its pathway is cofactor biosynthesis; (R)-pantothenate biosynthesis; (R)-pantothenate from (R)-pantoate and beta-alanine: step 1/1. Its function is as follows. Catalyzes the condensation of pantoate with beta-alanine in an ATP-dependent reaction via a pantoyl-adenylate intermediate. This chain is Pantothenate synthetase, found in Psychrobacter cryohalolentis (strain ATCC BAA-1226 / DSM 17306 / VKM B-2378 / K5).